Here is a 111-residue protein sequence, read N- to C-terminus: Nucleoid-associated protein Cag_1190 (111 aa).

It belongs to the YbaB/EbfC family. In terms of assembly, homodimer.

The protein localises to the cytoplasm. It localises to the nucleoid. Its function is as follows. Binds to DNA and alters its conformation. May be involved in regulation of gene expression, nucleoid organization and DNA protection. This is Nucleoid-associated protein Cag_1190 from Chlorobium chlorochromatii (strain CaD3).